The following is a 511-amino-acid chain: Histidine ammonia-lyase (511 aa).

Positions 142-144 (ASG) form a cross-link, 5-imidazolinone (Ala-Gly). Serine 143 carries the 2,3-didehydroalanine (Ser) modification.

This sequence belongs to the PAL/histidase family. In terms of processing, contains an active site 4-methylidene-imidazol-5-one (MIO), which is formed autocatalytically by cyclization and dehydration of residues Ala-Ser-Gly.

The protein resides in the cytoplasm. It catalyses the reaction L-histidine = trans-urocanate + NH4(+). Its pathway is amino-acid degradation; L-histidine degradation into L-glutamate; N-formimidoyl-L-glutamate from L-histidine: step 1/3. The protein is Histidine ammonia-lyase of Phenylobacterium zucineum (strain HLK1).